The chain runs to 75 residues: uncharacterized protein (75 aa).

This is an uncharacterized protein from Escherichia coli O6:H1 (strain CFT073 / ATCC 700928 / UPEC).